The following is a 238-amino-acid chain: Large ribosomal subunit protein uL5c (238 aa).

The protein belongs to the universal ribosomal protein uL5 family. Part of the 50S ribosomal subunit; contacts the 5S rRNA.

Its subcellular location is the plastid. The protein localises to the chloroplast. Binds 5S rRNA, forms part of the central protuberance of the 50S subunit. This chain is Large ribosomal subunit protein uL5c (rpl5), found in Phaeodactylum tricornutum (strain CCAP 1055/1).